The following is a 252-amino-acid chain: Triosephosphate isomerase (252 aa).

10-12 (NWK) is a substrate binding site. Histidine 96 (electrophile) is an active-site residue. The active-site Proton acceptor is glutamate 168. Residues glycine 174, serine 214, and 235-236 (GG) each bind substrate.

Belongs to the triosephosphate isomerase family. Homodimer.

The protein localises to the cytoplasm. The enzyme catalyses D-glyceraldehyde 3-phosphate = dihydroxyacetone phosphate. Its pathway is carbohydrate biosynthesis; gluconeogenesis. It participates in carbohydrate degradation; glycolysis; D-glyceraldehyde 3-phosphate from glycerone phosphate: step 1/1. Involved in the gluconeogenesis. Catalyzes stereospecifically the conversion of dihydroxyacetone phosphate (DHAP) to D-glyceraldehyde-3-phosphate (G3P). The sequence is that of Triosephosphate isomerase from Lactobacillus delbrueckii subsp. bulgaricus (strain ATCC 11842 / DSM 20081 / BCRC 10696 / JCM 1002 / NBRC 13953 / NCIMB 11778 / NCTC 12712 / WDCM 00102 / Lb 14).